We begin with the raw amino-acid sequence, 101 residues long: Putative pterin-4-alpha-carbinolamine dehydratase (101 aa).

This sequence belongs to the pterin-4-alpha-carbinolamine dehydratase family.

It carries out the reaction (4aS,6R)-4a-hydroxy-L-erythro-5,6,7,8-tetrahydrobiopterin = (6R)-L-erythro-6,7-dihydrobiopterin + H2O. This is Putative pterin-4-alpha-carbinolamine dehydratase from Rhizobium rhizogenes (strain K84 / ATCC BAA-868) (Agrobacterium radiobacter).